The following is a 460-amino-acid chain: Putative protein p41 (460 aa).

A Helicase ATP-binding domain is found at 14–186 (INHLLDIKRS…WGQAWFVDQG (173 aa)).

The chain is Putative protein p41 (41) from Escherichia coli (Bacteriophage APSE-1).